Reading from the N-terminus, the 293-residue chain is 4-hydroxybenzoate octaprenyltransferase (293 aa).

8 helical membrane passes run 41-61, 98-118, 122-142, 145-165, 167-187, 218-238, 241-261, and 272-292; these read FAAA…LGVI, TEAK…DLLL, TFLL…MKRF, LPQV…YGAV, ESLP…TVAY, IIAL…WISQ, WGYF…CWLT, and AFLN…VGIY.

The protein belongs to the UbiA prenyltransferase family. It depends on Mg(2+) as a cofactor.

It localises to the cell inner membrane. It catalyses the reaction all-trans-octaprenyl diphosphate + 4-hydroxybenzoate = 4-hydroxy-3-(all-trans-octaprenyl)benzoate + diphosphate. It participates in cofactor biosynthesis; ubiquinone biosynthesis. In terms of biological role, catalyzes the prenylation of para-hydroxybenzoate (PHB) with an all-trans polyprenyl group. Mediates the second step in the final reaction sequence of ubiquinone-8 (UQ-8) biosynthesis, which is the condensation of the polyisoprenoid side chain with PHB, generating the first membrane-bound Q intermediate 3-octaprenyl-4-hydroxybenzoate. This Actinobacillus pleuropneumoniae serotype 5b (strain L20) protein is 4-hydroxybenzoate octaprenyltransferase.